Consider the following 401-residue polypeptide: Transcriptional regulator Myc-2 (401 aa).

Thr-58 carries O-linked (GlcNAc) threonine glycosylation. The short motif at 76–84 (EMVSEFLGD) is the 9aaTAD element. Disordered regions lie at residues 177–251 (SSKS…SRYP) and 286–325 (LESS…HNVL). The segment covering 205–230 (DSEDEEEEEEEEEEEEEEEEEEEEID) has biased composition (acidic residues). Over residues 233–247 (TVEKRQKRNEAEVSD) the composition is skewed to basic and acidic residues. The segment covering 288–297 (SSSSNNSSSN) has biased composition (low complexity). The bHLH domain maps to 317 to 369 (DKRRTHNVLERQRRNELKLSFFALRDEIPEVANNEKAAKVVILKKATECIHSM). The tract at residues 376–397 (LLSIKEQLRRKSEQLKHRLQQL) is leucine-zipper.

In terms of assembly, efficient DNA binding requires dimerization with another bHLH protein. Binds DNA as a heterodimer with MAX.

Its subcellular location is the nucleus. Transcription factor that binds DNA in a non-specific manner, yet also specifically recognizes the core sequence 5'-CAC[GA]TG-3'. Activates the transcription of growth-related genes. The sequence is that of Transcriptional regulator Myc-2 (mycb) from Cyprinus carpio (Common carp).